The sequence spans 145 residues: MSRIKAIIASVIICIIVCLSWAVNHYRDNAITYKEQRDKATSIIADMQKRQRDVAELDARYTKELADANATIETLRADVSAGRKRLQVSATCPKSTTGASGMGDGESPRLTADAELNYYRLRSGIDRITAQVNYLQEYIRSQCLK.

The Cytoplasmic portion of the chain corresponds to 1–3 (MSR). A helical; Signal-anchor for type II membrane protein transmembrane segment spans residues 4-24 (IKAIIASVIICIIVCLSWAVN). The Periplasmic portion of the chain corresponds to 25-145 (HYRDNAITYK…QEYIRSQCLK (121 aa)).

This sequence belongs to the Lambdavirus i-spanin family. As to quaternary structure, homodimer; disulfide-linked. Interacts (via C-terminus) with the spanin outer lipoprotein subunit (via C-terminus). Part of the spanin complex which spans the entire periplasmic space. The spanin complex is composed of one homodimer of the i-spanin linked by intermolecular disulfide bonds involving two Cys residues and one homodimer of the o-spanin covalently linked by an intermolecular disulfide bond involving one Cys.

The protein resides in the host cell inner membrane. Component of the spanin complex that disrupts the host outer membrane and participates in cell lysis during virus exit. The spanin complex conducts the final step in host lysis by disrupting the outer membrane after holin and endolysin action have permeabilized the inner membrane and degraded the host peptidoglycans. Host outer membrane disruption is due to local fusion between the inner and outer membrane performed by the spanin complex. The polypeptide is Spanin, inner membrane subunit (15) (Salmonella typhimurium (Bacteriophage P22)).